The chain runs to 61 residues: Protein stunted (61 aa).

The sufficient for mth activation stretch occupies residues 3-15 (AWRAAGITYIQYS).

This sequence belongs to the eukaryotic ATPase epsilon family.

Its function is as follows. Activates the G-protein coupled receptor mth in vitro, leading to increased intracellular calcium ion levels. The polypeptide is Protein stunted (Drosophila melanogaster (Fruit fly)).